The chain runs to 171 residues: Minor capsid protein 3 (171 aa).

Interacts with the major capsid protein.

It localises to the virion. Functionally, one of the minor capsid proteins that constitute a network internal to the major capsid proteins and outside the lipid membrane. The minor capsid proteins glue and stabilize the capsomers. The protein is Minor capsid protein 3 of Chlorella (PBCV-1).